The sequence spans 101 residues: Protein E7 (101 aa).

Residues Met1–Leu44 form an E7 terminal domain region. Residues Leu27–Glu31 carry the LXCXE motif; interaction with host RB1 and TMEM173/STING motif. A zinc finger spans residues Cys56–Cys92. The Nuclear export signal motif lies at Ile74–Phe82.

It belongs to the papillomaviridae E7 protein family. Homodimer. Homooligomer. Interacts with host RB1; this interaction induces dissociation of RB1-E2F1 complex thereby disrupting RB1 activity. Interacts with host EP300; this interaction represses EP300 transcriptional activity. Interacts with protein E2; this interaction inhibits E7 oncogenic activity. Interacts with host TMEM173/STING; this interaction impairs the ability of TMEM173/STING to sense cytosolic DNA and promote the production of type I interferon (IFN-alpha and IFN-beta). Highly phosphorylated.

Its subcellular location is the host cytoplasm. The protein resides in the host nucleus. Its function is as follows. Plays a role in viral genome replication by driving entry of quiescent cells into the cell cycle. Stimulation of progression from G1 to S phase allows the virus to efficiently use the cellular DNA replicating machinery to achieve viral genome replication. E7 protein has both transforming and trans-activating activities. Induces the disassembly of the E2F1 transcription factor from RB1, with subsequent transcriptional activation of E2F1-regulated S-phase genes. Interferes with host histone deacetylation mediated by HDAC1 and HDAC2, leading to transcription activation. Also plays a role in the inhibition of both antiviral and antiproliferative functions of host interferon alpha. Interaction with host TMEM173/STING impairs the ability of TMEM173/STING to sense cytosolic DNA and promote the production of type I interferon (IFN-alpha and IFN-beta). In Homo sapiens (Human), this protein is Protein E7.